A 364-amino-acid chain; its full sequence is Fructose-bisphosphate aldolase B (364 aa).

At Ala-2 the chain carries N-acetylalanine. An N6-succinyllysine modification is found at Lys-13. Ser-36 is modified (phosphoserine). Phosphothreonine is present on Thr-39. Residue Arg-43 coordinates beta-D-fructose 1,6-bisphosphate. Thr-119 is subject to Phosphothreonine. An N6-succinyllysine modification is found at Lys-121. Ser-132 carries the post-translational modification Phosphoserine. Catalysis depends on Glu-188, which acts as the Proton acceptor. Lys-230 (schiff-base intermediate with dihydroxyacetone-P) is an active-site residue. Ser-272, Ser-276, Ser-299, and Ser-301 each carry phosphoserine. Position 272–274 (272–274 (SGG)) interacts with beta-D-fructose 1,6-bisphosphate. Arg-304 is a beta-D-fructose 1,6-bisphosphate binding site. Residue Ser-309 is modified to Phosphoserine. Residue Lys-317 is modified to N6-succinyllysine.

Belongs to the class I fructose-bisphosphate aldolase family. In terms of assembly, homotetramer. Interacts with BBS1, BBS2, BBS4 and BBS7. Forms a ternary complex with G6PD and TP53; this interaction is direct.

The protein localises to the cytoplasm. It localises to the cytosol. Its subcellular location is the cytoskeleton. The protein resides in the microtubule organizing center. It is found in the centrosome. The protein localises to the centriolar satellite. The enzyme catalyses beta-D-fructose 1,6-bisphosphate = D-glyceraldehyde 3-phosphate + dihydroxyacetone phosphate. The catalysed reaction is beta-D-fructose 1-phosphate = D-glyceraldehyde + dihydroxyacetone phosphate. It functions in the pathway carbohydrate degradation; glycolysis; D-glyceraldehyde 3-phosphate and glycerone phosphate from D-glucose: step 4/4. Its pathway is carbohydrate biosynthesis; gluconeogenesis. It participates in carbohydrate metabolism; fructose metabolism. Functionally, catalyzes the aldol cleavage of fructose 1,6-biphosphate to form two triosephosphates dihydroxyacetone phosphate and D-glyceraldehyde 3-phosphate in glycolysis as well as the reverse stereospecific aldol addition reaction in gluconeogenesis. In fructolysis, metabolizes fructose 1-phosphate derived from the phosphorylation of dietary fructose by fructokinase into dihydroxyacetone phosphate and D-glyceraldehyde. Acts as an adapter independently of its enzymatic activity, exerts a tumor suppressor role by stabilizing the ternary complex with G6PD and TP53 to inhibit G6PD activity and keep oxidative pentose phosphate metabolism in check. This Ovis aries (Sheep) protein is Fructose-bisphosphate aldolase B (ALDOB).